A 530-amino-acid polypeptide reads, in one-letter code: Seeligeriolysin (530 aa).

Positions 1 to 25 (MKIFGLVIMSLLFVSLPITQQPEAR) are cleaved as a signal peptide. Residues 36-55 (TISPAETPESPPATPKTPVE) form a disordered region. A run of 4 beta stranded transmembrane segments spans residues 215–228 (ESQL…AFKA), 235–244 (VNFEAISDGK), 313–322 (SNKVKTAFEA), and 330–342 (KGDV…IKNS). The Conserved undecapeptide signature appears at 484–494 (ECTGLFWEWWR). Positions 516 to 517 (TL) match the Cholesterol binding motif.

This sequence belongs to the cholesterol-dependent cytolysin family. As to quaternary structure, homooligomeric pore complex of 35 to 50 subunits; when inserted in the host membrane.

The protein localises to the secreted. Its subcellular location is the host cell membrane. Functionally, a cholesterol-dependent toxin that causes cytolysis by forming pores in cholesterol containing host membranes. L.seeligeri is non-pathogenic, perhaps in part because this protein is about 25% as toxic as listeriolysin O. Mutating a single residue in the undecapeptide increases toxicity 2-fold. After binding to target membranes, the protein undergoes a major conformation change, leading to its insertion in the host membrane and formation of an oligomeric pore complex. Cholesterol is required for binding to host membranes, membrane insertion and pore formation; cholesterol binding is mediated by a Thr-Leu pair in the C-terminus. Can be reversibly inactivated by oxidation. The protein is Seeligeriolysin of Listeria seeligeri.